The sequence spans 478 residues: Cytochrome c-552 (478 aa).

The first 26 residues, 1–26 (MARKTLRARRFFSLIFPFFFITSVYA), serve as a signal peptide directing secretion. Residue histidine 94 participates in heme c binding. Heme contacts are provided by cysteine 122, cysteine 125, and lysine 126. Residues cysteine 160, cysteine 163, histidine 164, cysteine 209, cysteine 212, and histidine 213 each contribute to the heme c site. The Ca(2+) site is built by glutamate 215, tyrosine 216, lysine 261, and glutamine 263. Tyrosine 216 contacts substrate. Histidine 264 is a binding site for substrate. Heme c-binding residues include histidine 275, cysteine 282, cysteine 285, histidine 286, histidine 301, cysteine 314, cysteine 317, histidine 318, and histidine 393.

Belongs to the cytochrome c-552 family. Requires Ca(2+) as cofactor. Heme c is required as a cofactor.

It is found in the periplasm. It catalyses the reaction 6 Fe(III)-[cytochrome c] + NH4(+) + 2 H2O = 6 Fe(II)-[cytochrome c] + nitrite + 8 H(+). It functions in the pathway nitrogen metabolism; nitrate reduction (assimilation). Functionally, catalyzes the reduction of nitrite to ammonia, consuming six electrons in the process. The sequence is that of Cytochrome c-552 from Salmonella typhi.